We begin with the raw amino-acid sequence, 388 residues long: Outer membrane protein assembly factor BamB (388 aa).

The first 21 residues, 1-21, serve as a signal peptide directing secretion; it reads MILGWTQRIFTLLVVVTLLAA. The N-palmitoyl cysteine moiety is linked to residue Cys22. The S-diacylglycerol cysteine moiety is linked to residue Cys22.

Belongs to the BamB family. As to quaternary structure, part of the Bam complex.

It is found in the cell outer membrane. Part of the outer membrane protein assembly complex, which is involved in assembly and insertion of beta-barrel proteins into the outer membrane. This chain is Outer membrane protein assembly factor BamB, found in Kangiella koreensis (strain DSM 16069 / JCM 12317 / KCTC 12182 / SW-125).